Reading from the N-terminus, the 365-residue chain is Chorismate synthase (365 aa).

R46 provides a ligand contact to NADP(+). FMN is bound by residues 123 to 125 (RSS), 241 to 242 (NG), G281, 296 to 300 (KPTPS), and R322.

It belongs to the chorismate synthase family. In terms of assembly, homotetramer. Requires FMNH2 as cofactor.

It carries out the reaction 5-O-(1-carboxyvinyl)-3-phosphoshikimate = chorismate + phosphate. It participates in metabolic intermediate biosynthesis; chorismate biosynthesis; chorismate from D-erythrose 4-phosphate and phosphoenolpyruvate: step 7/7. Functionally, catalyzes the anti-1,4-elimination of the C-3 phosphate and the C-6 proR hydrogen from 5-enolpyruvylshikimate-3-phosphate (EPSP) to yield chorismate, which is the branch point compound that serves as the starting substrate for the three terminal pathways of aromatic amino acid biosynthesis. This reaction introduces a second double bond into the aromatic ring system. The sequence is that of Chorismate synthase from Helicobacter pylori (strain J99 / ATCC 700824) (Campylobacter pylori J99).